Reading from the N-terminus, the 162-residue chain is Phospholipase A and acyltransferase 3 (162 aa).

At 1–133 (MRAPIPEPKP…VARSDQVRDV (133 aa)) the chain is on the cytoplasmic side. The LRAT domain maps to 13–129 (LIEIFRPFYR…LRYGVARSDQ (117 aa)). Residues His-23 and His-35 contribute to the active site. Catalysis depends on Cys-113, which acts as the Acyl-thioester intermediate. Residues 134–154 (IIAASAAGMGLAAMSLIGVMF) form a helical membrane-spanning segment. At 155 to 162 (SRNKRQKQ) the chain is on the lumenal side.

It belongs to the H-rev107 family. In terms of assembly, interacts with PPP2R1A; this interaction might decrease PP2A activity.

It localises to the cell membrane. The protein localises to the cytoplasm. The protein resides in the cytosol. It is found in the perinuclear region. Its subcellular location is the peroxisome membrane. It localises to the mitochondrion membrane. The protein localises to the nucleus envelope. The protein resides in the lysosome membrane. It is found in the endoplasmic reticulum membrane. It carries out the reaction a 1,2-diacyl-sn-glycero-3-phosphocholine + H2O = a 1-acyl-sn-glycero-3-phosphocholine + a fatty acid + H(+). The catalysed reaction is a 1,2-diacyl-sn-glycero-3-phosphocholine + H2O = a 2-acyl-sn-glycero-3-phosphocholine + a fatty acid + H(+). The enzyme catalyses 1,2-dihexadecanoyl-sn-glycero-3-phosphocholine + H2O = 1-hexadecanoyl-sn-glycero-3-phosphocholine + hexadecanoate + H(+). It catalyses the reaction 1,2-dihexadecanoyl-sn-glycero-3-phosphocholine + H2O = 2-hexadecanoyl-sn-glycero-3-phosphocholine + hexadecanoate + H(+). It carries out the reaction 1-hexadecanoyl-2-(9Z-octadecenoyl)-sn-glycero-3-phosphocholine + H2O = 2-(9Z-octadecenoyl)-sn-glycero-3-phosphocholine + hexadecanoate + H(+). The catalysed reaction is 1-hexadecanoyl-2-(9Z-octadecenoyl)-sn-glycero-3-phosphocholine + H2O = 1-hexadecanoyl-sn-glycero-3-phosphocholine + (9Z)-octadecenoate + H(+). The enzyme catalyses 1-hexadecanoyl-2-(5Z,8Z,11Z,14Z-eicosatetraenoyl)-sn-glycero-3-phosphocholine + H2O = 1-hexadecanoyl-sn-glycero-3-phosphocholine + (5Z,8Z,11Z,14Z)-eicosatetraenoate + H(+). It catalyses the reaction 1-hexadecanoyl-2-(5Z,8Z,11Z,14Z-eicosatetraenoyl)-sn-glycero-3-phosphocholine + H2O = 2-(5Z,8Z,11Z,14Z)-eicosatetraenoyl-sn-glycero-3-phosphocholine + hexadecanoate + H(+). It carries out the reaction 1-hexadecanoyl-2-(9Z,12Z-octadecadienoyl)-sn-glycero-3-phosphoethanolamine + H2O = 1-hexadecanoyl-sn-glycero-3-phosphoethanolamine + (9Z,12Z)-octadecadienoate + H(+). The catalysed reaction is 1-hexadecanoyl-2-(9Z,12Z-octadecadienoyl)-sn-glycero-3-phosphoethanolamine + H2O = 2-(9Z,12Z)-octadecadienoyl-sn-glycero-3-phosphoethanolamine + hexadecanoate + H(+). The enzyme catalyses 1-hexadecanoyl-2-(5Z,8Z,11Z,14Z-eicosatetraenoyl)-sn-glycero-3-phosphoethanolamine + H2O = 1-hexadecanoyl-sn-glycero-3-phosphoethanolamine + (5Z,8Z,11Z,14Z)-eicosatetraenoate + H(+). It catalyses the reaction 1-hexadecanoyl-2-(5Z,8Z,11Z,14Z-eicosatetraenoyl)-sn-glycero-3-phosphoethanolamine + H2O = 2-(5Z,8Z,11Z,14Z)-eicosatetraenoyl-sn-glycero-3-phosphoethanolamine + hexadecanoate + H(+). It carries out the reaction 1-hexanoyl-2-acyl-sn-glycero-3-phosphocholine + H2O = hexanoate + a 2-acyl-sn-glycero-3-phosphocholine + H(+). The catalysed reaction is 1-hexanoyl-2-acyl-sn-glycero-3-phosphocholine + H2O = 1-hexanoyl-sn-glycero-3-phosphocholine + a fatty acid + H(+). The enzyme catalyses 1,2-diheptadecanoyl-sn-glycero-3-phosphoethanolamine + 1-(9Z-octadecenoyl)-2-hexadecanoyl-sn-glycero-3-phosphocholine = 1,2-diheptadecanoyl-sn-glycero-3-phospho-N-hexadecanoyl-ethanolamine + 1-(9Z-octadecenoyl)-sn-glycero-3-phosphocholine + H(+). It catalyses the reaction 1,2-diheptadecanoyl-sn-glycero-3-phosphoethanolamine + 1-(9Z-octadecenoyl)-2-hexadecanoyl-sn-glycero-3-phosphocholine = 1,2-diheptadecanoyl-sn-glycero-3-phospho-N-(9Z-octadecenoyl)-ethanolamine + 2-hexadecanoyl-sn-glycero-3-phosphocholine + H(+). It carries out the reaction 1,2-dihexanoyl-sn-glycero-3-phosphoethanolamine + 2-heptanoyl-sn-glycero-3-phosphocholine = hexanoyl-sn-glycero-3-phosphoethanolamine + 1-hexanoyl-2-heptanoyl-sn-glycero-3-phosphocholine. The catalysed reaction is 1-hexadecanoyl-2-octadecanoyl-sn-glycero-3-phosphocholine + H2O = octadecanoate + 1-hexadecanoyl-sn-glycero-3-phosphocholine + H(+). The enzyme catalyses 1-hexadecanoyl-2-octadecanoyl-sn-glycero-3-phosphocholine + H2O = 2-octadecanoyl-sn-glycero-3-phosphocholine + hexadecanoate + H(+). It catalyses the reaction 1-octadecanoyl-2-hexadecanoyl-sn-glycero-3-phosphocholine + H2O = 1-octadecanoyl-sn-glycero-3-phosphocholine + hexadecanoate + H(+). It carries out the reaction 1-octadecanoyl-2-hexadecanoyl-sn-glycero-3-phosphocholine + H2O = 2-hexadecanoyl-sn-glycero-3-phosphocholine + octadecanoate + H(+). The catalysed reaction is 1-hexadecanoyl-2-(9Z,12Z-octadecadienoyl)-sn-glycero-3-phosphocholine + H2O = (9Z,12Z)-octadecadienoate + 1-hexadecanoyl-sn-glycero-3-phosphocholine + H(+). The enzyme catalyses 1-hexadecanoyl-2-(9Z,12Z-octadecadienoyl)-sn-glycero-3-phosphocholine + H2O = 2-(9Z,12Z-octadecadienoyl)-sn-glycero-3-phosphocholine + hexadecanoate + H(+). It catalyses the reaction 1,2-di-(9Z-octadecenoyl)-sn-glycero-3-phosphocholine + H2O = 2-(9Z-octadecenoyl)-sn-glycero-3-phosphocholine + (9Z)-octadecenoate + H(+). It carries out the reaction 1,2-dihexadecanoyl-sn-glycero-3-phosphocholine + H2O = hexadecanoyl-sn-glycero-3-phosphocholine + hexadecanoate + H(+). The catalysed reaction is 1,2-di-(9Z-octadecenoyl)-sn-glycero-3-phosphocholine + H2O = 1-(9Z-octadecenoyl)-sn-glycero-3-phosphocholine + (9Z)-octadecenoate + H(+). The enzyme catalyses 1,2-di-(9Z-octadecenoyl)-sn-glycero-3-phosphoethanolamine + 1,2-dihexadecanoyl-sn-glycero-3-phosphocholine = hexadecanoyl-sn-glycero-3-phosphocholine + N-hexadecanoyl-1,2-di-(9Z-octadecenoyl)-sn-glycero-3-phosphoethanolamine + H(+). It catalyses the reaction 1,2-di-(9Z,12Z-octadecadienoyl)-sn-glycero-3-phosphocholine + H2O = 1-(9Z,12Z)-octadecadienoyl-sn-glycero-3-phosphocholine + (9Z,12Z)-octadecadienoate + H(+). Exhibits both phospholipase A1/2 and acyltransferase activities. Shows phospholipase A1 (PLA1) and A2 (PLA2), catalyzing the calcium-independent release of fatty acids from the sn-1 or sn-2 position of glycerophospholipids. For most substrates, PLA1 activity is much higher than PLA2 activity. Shows O-acyltransferase activity, catalyzing the transfer of a fatty acyl group from glycerophospholipid to the hydroxyl group of lysophospholipid. Shows N-acyltransferase activity, catalyzing the calcium-independent transfer of a fatty acyl group at the sn-1 position of phosphatidylcholine (PC) and other glycerophospholipids to the primary amine of phosphatidylethanolamine (PE), forming N-acylphosphatidylethanolamine (NAPE), which serves as precursor for N-acylethanolamines (NAEs). Exhibits high N-acyltransferase activity and low phospholipase A1/2 activity. Required for complete organelle rupture and degradation that occur during eye lens terminal differentiation, when fiber cells that compose the lens degrade all membrane-bound organelles in order to provide lens with transparency to allow the passage of light. Organelle membrane degradation is probably catalyzed by the phospholipase activity. Plays a role in phospholipid metabolism and adipogenesis. The chain is Phospholipase A and acyltransferase 3 from Pongo abelii (Sumatran orangutan).